The chain runs to 274 residues: Chromatin modification-related protein YNG2 (274 aa).

Positions Glu-121–Asp-194 are disordered. The span at Thr-166 to Asp-180 shows a compositional bias: basic and acidic residues. The PHD-type zinc finger occupies Asn-215–Glu-264. Zn(2+)-binding residues include Cys-218, Cys-220, Cys-231, Cys-236, His-242, Cys-245, Cys-258, and Cys-261.

The protein belongs to the ING family. As to quaternary structure, interacts with H3K4me3 and to a lesser extent with H3K4me2. Component of the NuA4 histone acetyltransferase complex.

The protein resides in the nucleus. Functionally, component of the NuA4 histone acetyltransferase complex which is involved in transcriptional activation of selected genes principally by acetylation of nucleosomal histone H4 and H2A. The NuA4 complex is also involved in DNA repair. Involved in cell cycle progression and meiosis. This chain is Chromatin modification-related protein YNG2 (YNG2), found in Candida glabrata (strain ATCC 2001 / BCRC 20586 / JCM 3761 / NBRC 0622 / NRRL Y-65 / CBS 138) (Yeast).